The sequence spans 319 residues: DNA-directed RNA polymerases II, IV and V subunit 3 (319 aa).

Residue M1 is modified to N-acetylmethionine.

The protein belongs to the archaeal Rpo3/eukaryotic RPB3 RNA polymerase subunit family. Component of the RNA polymerase II complex consisting of at least 12 subunits. Interacts with SHH1, CLSY1, NRPB11 and NRPD1. Interacts with IYO.

The protein localises to the nucleus. In terms of biological role, DNA-dependent RNA polymerase catalyzes the transcription of DNA into RNA using the four ribonucleoside triphosphates as substrates. Component of RNA polymerase II which synthesizes mRNA precursors and many functional non-coding RNAs. Pol II is the central component of the basal RNA polymerase II transcription machinery. It is composed of mobile elements that move relative to each other. NRPB3 is part of the core element with the central large cleft and the clamp element that moves to open and close the cleft. Component of RNA polymerases IV and V which mediate short-interfering RNAs (siRNA) accumulation and subsequent RNA-directed DNA methylation-dependent (RdDM) transcriptional gene silencing (TGS) of endogenous repeated sequences, including transposable elements. The chain is DNA-directed RNA polymerases II, IV and V subunit 3 (NRPB3) from Arabidopsis thaliana (Mouse-ear cress).